A 262-amino-acid polypeptide reads, in one-letter code: Small ribosomal subunit protein uS2 (262 aa).

Belongs to the universal ribosomal protein uS2 family.

The protein is Small ribosomal subunit protein uS2 of Borreliella burgdorferi (strain ZS7) (Borrelia burgdorferi).